The sequence spans 297 residues: Tryptophan 2,3-dioxygenase (297 aa).

Substrate-binding positions include 51 to 55, Y113, and R117; that span reads FIIQH. H240 contacts heme. A substrate-binding site is contributed by T254.

It belongs to the tryptophan 2,3-dioxygenase family. In terms of assembly, homotetramer. Heme serves as cofactor.

The catalysed reaction is L-tryptophan + O2 = N-formyl-L-kynurenine. Its pathway is amino-acid degradation; L-tryptophan degradation via kynurenine pathway; L-kynurenine from L-tryptophan: step 1/2. Functionally, heme-dependent dioxygenase that catalyzes the oxidative cleavage of the L-tryptophan (L-Trp) pyrrole ring and converts L-tryptophan to N-formyl-L-kynurenine. Catalyzes the oxidative cleavage of the indole moiety. The sequence is that of Tryptophan 2,3-dioxygenase from Xanthomonas oryzae pv. oryzae (strain MAFF 311018).